A 575-amino-acid chain; its full sequence is uncharacterized protein (575 aa).

The signal sequence occupies residues 1–28; the sequence is MSNLLWKSLVVSPAVLGATLLVSSAAIA. One can recognise an SLH domain in the interval 87–151; it reads SVSQFSDVQP…DRVNELIATA (65 aa). Residues 158-196 are a coiled coil; sequence KQDLATLQRLQEEFSAELATLRGRVDALEARTAELEANQ.

It belongs to the OprB family.

This is an uncharacterized protein from Nostoc sp. (strain PCC 7120 / SAG 25.82 / UTEX 2576).